Here is an 89-residue protein sequence, read N- to C-terminus: cAMP-regulated phosphoprotein 21 (89 aa).

A disordered region spans residues 1 to 89 (MSEQGDLNQA…GGESLQDQTL (89 aa)). An N-acetylserine modification is found at Ser2. The segment covering 9-25 (QAIAEEGGTEQETATPE) has biased composition (low complexity). Residue Ser33 is modified to Phosphoserine. The segment covering 40–53 (LELQRRLEAQNQER) has biased composition (basic and acidic residues). Ser56 is modified (phosphoserine).

As to quaternary structure, interacts with CALM1. Phosphorylation at Ser-56 favors interaction with CALM1.

The protein resides in the cytoplasm. Functionally, may act as a competitive inhibitor of calmodulin-dependent enzymes such as calcineurin in neurons. The protein is cAMP-regulated phosphoprotein 21 (ARPP21) of Pongo abelii (Sumatran orangutan).